A 729-amino-acid polypeptide reads, in one-letter code: Sodium-dependent neutral amino acid transporter B(0)AT2 (729 aa).

Topologically, residues M1–Q69 are cytoplasmic. Phosphoserine occurs at positions 25 and 55. 3 helical membrane-spanning segments follow: residues Y70 to L90, A98 to L117, and G142 to I162. Residues G163–N225 lie on the Extracellular side of the membrane. Residues N187 and N213 are each glycosylated (N-linked (GlcNAc...) asparagine). 4 helical membrane passes run W226–I244, I253–I270, V306–Y323, and V335–L356. The Extracellular segment spans residues G357–H452. N-linked (GlcNAc...) asparagine glycosylation is found at N383 and N394. The next 5 helical transmembrane spans lie at F453–L472, I496–Q514, T530–I550, Y571–M592, and V620–C642. The Cytoplasmic portion of the chain corresponds to N643–L729. Phosphoserine is present on residues S687, S699, and S701.

Belongs to the sodium:neurotransmitter symporter (SNF) (TC 2.A.22) family. SLC6A15 subfamily.

It localises to the membrane. It carries out the reaction L-leucine(in) + Na(+)(in) = L-leucine(out) + Na(+)(out). The catalysed reaction is L-isoleucine(in) + Na(+)(in) = L-isoleucine(out) + Na(+)(out). It catalyses the reaction L-methionine(in) + Na(+)(in) = L-methionine(out) + Na(+)(out). The enzyme catalyses L-proline(in) + Na(+)(in) = L-proline(out) + Na(+)(out). It carries out the reaction L-alanine(in) + Na(+)(in) = L-alanine(out) + Na(+)(out). The catalysed reaction is L-asparagine(in) + Na(+)(in) = L-asparagine(out) + Na(+)(out). It catalyses the reaction L-valine(in) + Na(+)(in) = L-valine(out) + Na(+)(out). The enzyme catalyses L-cysteine(in) + Na(+)(in) = L-cysteine(out) + Na(+)(out). It carries out the reaction L-glutamine(in) + Na(+)(in) = L-glutamine(out) + Na(+)(out). The catalysed reaction is L-serine(in) + Na(+)(in) = L-serine(out) + Na(+)(out). It catalyses the reaction L-threonine(in) + Na(+)(in) = L-threonine(out) + Na(+)(out). The enzyme catalyses L-pipecolate(in) + Na(+)(in) = L-pipecolate(out) + Na(+)(out). It carries out the reaction L-phenylalanine(in) + Na(+)(in) = L-phenylalanine(out) + Na(+)(out). In terms of biological role, functions as a sodium-dependent neutral amino acid transporter. Exhibits preference for the branched-chain amino acids, particularly leucine, valine and isoleucine and methionine. Can also transport low-affinity substrates such as alanine, phenylalanine, glutamine and pipecolic acid. Mediates the saturable, pH-sensitive and electrogenic cotransport of proline and sodium ions with a stoichiometry of 1:1. May have a role as transporter for neurotransmitter precursors into neurons. In contrast to other members of the neurotransmitter transporter family, does not appear to be chloride-dependent. The chain is Sodium-dependent neutral amino acid transporter B(0)AT2 (SLC6A15) from Bos taurus (Bovine).